The sequence spans 374 residues: Probable dual-specificity RNA methyltransferase RlmN (374 aa).

Basic and acidic residues predominate over residues 1–17 (MEKNEISEERRTQEKEK). The tract at residues 1–22 (MEKNEISEERRTQEKEKQHGHR) is disordered. E119 (proton acceptor) is an active-site residue. The Radical SAM core domain occupies 125–360 (SEERITACIS…VTVRKSQGAT (236 aa)). C132 and C365 are joined by a disulfide. [4Fe-4S] cluster-binding residues include C139, C143, and C146. S-adenosyl-L-methionine is bound by residues 190–191 (GE), S223, 246–248 (SLH), and N322. The active-site S-methylcysteine intermediate is C365.

The protein belongs to the radical SAM superfamily. RlmN family. Requires [4Fe-4S] cluster as cofactor.

The protein localises to the cytoplasm. The enzyme catalyses adenosine(2503) in 23S rRNA + 2 reduced [2Fe-2S]-[ferredoxin] + 2 S-adenosyl-L-methionine = 2-methyladenosine(2503) in 23S rRNA + 5'-deoxyadenosine + L-methionine + 2 oxidized [2Fe-2S]-[ferredoxin] + S-adenosyl-L-homocysteine. It carries out the reaction adenosine(37) in tRNA + 2 reduced [2Fe-2S]-[ferredoxin] + 2 S-adenosyl-L-methionine = 2-methyladenosine(37) in tRNA + 5'-deoxyadenosine + L-methionine + 2 oxidized [2Fe-2S]-[ferredoxin] + S-adenosyl-L-homocysteine. In terms of biological role, specifically methylates position 2 of adenine 2503 in 23S rRNA and position 2 of adenine 37 in tRNAs. The polypeptide is Probable dual-specificity RNA methyltransferase RlmN (Chlorobaculum tepidum (strain ATCC 49652 / DSM 12025 / NBRC 103806 / TLS) (Chlorobium tepidum)).